Consider the following 99-residue polypeptide: L-rhamnose mutarotase (99 aa).

Position 18 (Tyr-18) interacts with substrate. The active-site Proton donor is His-22. Substrate-binding positions include Tyr-41 and 76-77; that span reads WW.

This sequence belongs to the rhamnose mutarotase family. As to quaternary structure, homodimer.

Its subcellular location is the cytoplasm. It carries out the reaction alpha-L-rhamnose = beta-L-rhamnose. The protein operates within carbohydrate metabolism; L-rhamnose metabolism. Its function is as follows. Involved in the anomeric conversion of L-rhamnose. This is L-rhamnose mutarotase from Shigella boydii serotype 18 (strain CDC 3083-94 / BS512).